Consider the following 258-residue polypeptide: Thiazole synthase (258 aa).

The active-site Schiff-base intermediate with DXP is Lys100. Residues Gly161, 187-188 (AG), and 209-210 (NT) each bind 1-deoxy-D-xylulose 5-phosphate.

This sequence belongs to the ThiG family. As to quaternary structure, homotetramer. Forms heterodimers with either ThiH or ThiS.

It is found in the cytoplasm. It catalyses the reaction [ThiS sulfur-carrier protein]-C-terminal-Gly-aminoethanethioate + 2-iminoacetate + 1-deoxy-D-xylulose 5-phosphate = [ThiS sulfur-carrier protein]-C-terminal Gly-Gly + 2-[(2R,5Z)-2-carboxy-4-methylthiazol-5(2H)-ylidene]ethyl phosphate + 2 H2O + H(+). It participates in cofactor biosynthesis; thiamine diphosphate biosynthesis. Its function is as follows. Catalyzes the rearrangement of 1-deoxy-D-xylulose 5-phosphate (DXP) to produce the thiazole phosphate moiety of thiamine. Sulfur is provided by the thiocarboxylate moiety of the carrier protein ThiS. In vitro, sulfur can be provided by H(2)S. This chain is Thiazole synthase, found in Campylobacter jejuni subsp. jejuni serotype O:6 (strain 81116 / NCTC 11828).